Consider the following 86-residue polypeptide: Antitoxin VapB33 (86 aa).

Functionally, antitoxin component of a type II toxin-antitoxin (TA) system. Upon expression in M.smegmatis neutralizes the effect of cognate toxin VapC33. The sequence is that of Antitoxin VapB33 (vapB33) from Mycobacterium tuberculosis (strain ATCC 25618 / H37Rv).